Reading from the N-terminus, the 445-residue chain is Phosphoglucosamine mutase (445 aa).

S102 functions as the Phosphoserine intermediate in the catalytic mechanism. 4 residues coordinate Mg(2+): S102, D241, D243, and D245. S102 bears the Phosphoserine mark.

Belongs to the phosphohexose mutase family. Requires Mg(2+) as cofactor. In terms of processing, activated by phosphorylation.

The enzyme catalyses alpha-D-glucosamine 1-phosphate = D-glucosamine 6-phosphate. In terms of biological role, catalyzes the conversion of glucosamine-6-phosphate to glucosamine-1-phosphate. The sequence is that of Phosphoglucosamine mutase from Proteus mirabilis (strain HI4320).